The primary structure comprises 219 residues: 2-hydroxy-3-keto-5-methylthiopentenyl-1-phosphate phosphatase (219 aa).

It belongs to the HAD-like hydrolase superfamily. MtnX family.

The catalysed reaction is 2-hydroxy-5-methylsulfanyl-3-oxopent-1-enyl phosphate + H2O = 1,2-dihydroxy-5-(methylsulfanyl)pent-1-en-3-one + phosphate. The protein operates within amino-acid biosynthesis; L-methionine biosynthesis via salvage pathway; L-methionine from S-methyl-5-thio-alpha-D-ribose 1-phosphate: step 4/6. Functionally, dephosphorylates 2-hydroxy-3-keto-5-methylthiopentenyl-1-phosphate (HK-MTPenyl-1-P) yielding 1,2-dihydroxy-3-keto-5-methylthiopentene (DHK-MTPene). The polypeptide is 2-hydroxy-3-keto-5-methylthiopentenyl-1-phosphate phosphatase (Bacillus cereus (strain G9842)).